The primary structure comprises 529 residues: Peptide chain release factor 3 (529 aa).

One can recognise a tr-type G domain in the interval 11-280; the sequence is NKRRTFAIIS…GLVKWAPAPM (270 aa). Residues 20–27, 88–92, and 142–145 each bind GTP; these read SHPDAGKT, DTPGH, and NKLD.

The protein belongs to the TRAFAC class translation factor GTPase superfamily. Classic translation factor GTPase family. PrfC subfamily.

It localises to the cytoplasm. Increases the formation of ribosomal termination complexes and stimulates activities of RF-1 and RF-2. It binds guanine nucleotides and has strong preference for UGA stop codons. It may interact directly with the ribosome. The stimulation of RF-1 and RF-2 is significantly reduced by GTP and GDP, but not by GMP. The sequence is that of Peptide chain release factor 3 from Proteus mirabilis (strain HI4320).